Reading from the N-terminus, the 376-residue chain is MATCLLMSTFTFIRCSVLKWGSGSSLPQEQKEKITKGPGLGDFISGEVESTDSWEDYMGKLRLEKGDKRLRLPPWLKKEIPIGKNYHSLKGTLRELNLATVCEEAKCPNIGECWGGGEDKTATATIMVMGDTCTRGCRFCSVKTARSPPPLDPNEPVHTAEAISRWGVDYIVITSVDRDDVADGGSAHFSECVKEIKKRIPSMLVECLTPDFRGDMEAVATVAQSGLDVFAHNIETVKRLTPFVRDPRAKYDQSLQVLSHVKKTVPDMVTKSSIMLGLGETDQEVRTAMEDLRRAGVDCLTLGQYMQPTKRHLKVQEYVTPTKFKHWEEVGGEMGFAYTASGPLVRSSYRAGEFYIKNLLNKKRTEATLDTSSQES.

7 residues coordinate [4Fe-4S] cluster: C102, C107, C113, C133, C137, C140, and S348. The Radical SAM core domain maps to G116–A337.

Belongs to the radical SAM superfamily. Lipoyl synthase family. [4Fe-4S] cluster serves as cofactor.

It is found in the mitochondrion. It catalyses the reaction [[Fe-S] cluster scaffold protein carrying a second [4Fe-4S](2+) cluster] + N(6)-octanoyl-L-lysyl-[protein] + 2 oxidized [2Fe-2S]-[ferredoxin] + 2 S-adenosyl-L-methionine + 4 H(+) = [[Fe-S] cluster scaffold protein] + N(6)-[(R)-dihydrolipoyl]-L-lysyl-[protein] + 4 Fe(3+) + 2 hydrogen sulfide + 2 5'-deoxyadenosine + 2 L-methionine + 2 reduced [2Fe-2S]-[ferredoxin]. It participates in protein modification; protein lipoylation via endogenous pathway; protein N(6)-(lipoyl)lysine from octanoyl-[acyl-carrier-protein]: step 2/2. In terms of biological role, catalyzes the radical-mediated insertion of two sulfur atoms into the C-6 and C-8 positions of the octanoyl moiety bound to the lipoyl domains of lipoate-dependent enzymes, thereby converting the octanoylated domains into lipoylated derivatives. The polypeptide is Lipoyl synthase, mitochondrial (Branchiostoma floridae (Florida lancelet)).